The sequence spans 357 residues: Selenide, water dikinase (357 aa).

The active site involves Cys25. Residues Lys28 and Thr57–Asp59 each bind ATP. Asp60 is a Mg(2+) binding site. ATP contacts are provided by residues Asp77, Asp100, and Gly148–Ser150. A Mg(2+)-binding site is contributed by Asp100. Asp236 contributes to the Mg(2+) binding site.

It belongs to the selenophosphate synthase 1 family. Class I subfamily. Homodimer. The cofactor is Mg(2+).

The catalysed reaction is hydrogenselenide + ATP + H2O = selenophosphate + AMP + phosphate + 2 H(+). In terms of biological role, synthesizes selenophosphate from selenide and ATP. The sequence is that of Selenide, water dikinase from Pseudomonas straminea.